The chain runs to 696 residues: Putative cyclic nucleotide-gated ion channel 13 (696 aa).

The Cytoplasmic segment spans residues 1-81 (MAFGRNNRVR…QGSFLQNWNK (81 aa)). The interval 45–65 (KPLSFGSHNKKRDSNSSTTTQ) is disordered. The helical transmembrane segment at 82–102 (IFLFASVIALAIDPLFFYIPI) threads the bilayer. Residues 103–116 (VDGERHCLNLHRNL) lie on the Extracellular side of the membrane. Residues 117–137 (EIAASVLRTFIDAFYIIHIVF) form a helical membrane-spanning segment. The Cytoplasmic segment spans residues 138-170 (QFRTAYISPSSRVFGRGELVDDPKAIAIKYLSS). Residues 171 to 191 (YFIIDLLSILPLPQLVVLAVI) form a helical membrane-spanning segment. Residues 192-204 (PNVNKPVSLITKD) are Extracellular-facing. A helical transmembrane segment spans residues 205–225 (YLITVIFTQYIPRILRIYPLY). Residues 226 to 243 (TEVTRTSGIVTETAWAGA) lie on the Cytoplasmic side of the membrane. Residues 244–264 (AWNLSLYMLASHVFGALWYLI) form a helical membrane-spanning segment. Over 265–367 (SVEREDRCWR…GQNLNTSKFV (103 aa)) the chain is Extracellular. The helical transmembrane segment at 368–388 (GEIIFAVSICISGLVLFALLI) threads the bilayer. The Cytoplasmic portion of the chain corresponds to 389 to 696 (GNMQKYLEST…SEPDFSLRNP (308 aa)). Residues 474 to 598 (LFEI…SKQL) and Glu-545 each bind a nucleoside 3',5'-cyclic phosphate. A calmodulin-binding region spans residues 590 to 605 (FRRLHSKQLQHTFRFY). One can recognise an IQ domain in the interval 610–639 (RTWGASFIQAAWRRHCRRKLARSLTEEEDR). A disordered region spans residues 677–696 (NNLPLLPPKPSEPDFSLRNP).

It belongs to the cyclic nucleotide-gated cation channel (TC 1.A.1.5) family. Homotetramer or heterotetramer.

The protein localises to the cell membrane. Functionally, putative cyclic nucleotide-gated ion channel. The protein is Putative cyclic nucleotide-gated ion channel 13 (CNGC13) of Arabidopsis thaliana (Mouse-ear cress).